A 660-amino-acid polypeptide reads, in one-letter code: Solute carrier family 5 member 4 (660 aa).

Residues 1 to 28 (MASTLSPSTVTKTPGPPEISERIQNAAD) are Cytoplasmic-facing. Residues 29 to 47 (ISVIVIYFVVVMAVGLWAM) traverse the membrane as a helical segment. At 48-64 (LRTNRGTVGGFFLAGRD) the chain is on the extracellular side. A helical transmembrane segment spans residues 65 to 85 (VTWWPMGASLFASNIGSGHFV). Residues 86 to 105 (GLAGTGAASGIAIAAFEWNA) are Cytoplasmic-facing. Residues 106–126 (LLLLLVLGWFFVPIYIKAGVM) form a helical membrane-spanning segment. The Extracellular portion of the chain corresponds to 127-171 (TMPEYLRKRFGGKRLQIYLSILSLFICVALRISSDIFSGAIFIKL). Residues 172–191 (ALGLDLYLAIFSLLAITAIY) form a helical membrane-spanning segment. Residues 192–208 (TITGGLASVIYTDTLQT) are Cytoplasmic-facing. Residues 209 to 229 (IIMLIGSFILMGFAFVEVGGY) form a helical membrane-spanning segment. Topologically, residues 230–270 (ESFTEKYMNAIPTIVEGDNLTISPKCYTPQGDSFHIFRDAV) are extracellular. N-linked (GlcNAc...) asparagine glycosylation occurs at Asn248. The chain crosses the membrane as a helical span at residues 271–291 (TGDIPWPGMIFGMTVVAAWYW). At 292–314 (CTDQVIVQRCLSGKDMSHVKAAC) the chain is on the cytoplasmic side. Residues 315-334 (IMCGYLKLLPMFLMVMPGMI) form a helical membrane-spanning segment. Topologically, residues 335 to 423 (SRILYTEKVA…RKQASEKELL (89 aa)) are extracellular. Residues 424 to 443 (IAGRLFIILLIVISIVWVPL) traverse the membrane as a helical segment. Topologically, residues 444–455 (VQVAQNGQLFHY) are cytoplasmic. Residues 456–476 (IESISSYLGPPIAAVFLLAIF) form a helical membrane-spanning segment. Residues 477–526 (CKRVNEQGAFWGLIIGFVMGLIRMIAEFVYGTGSCLAASNCPQIICGVHY) are Extracellular-facing. The helical transmembrane segment at 527 to 547 (LYFALILFFVSILVVLAISLL) threads the bilayer. Residues 548–638 (TKPIPDVHLY…TDTSEKPLWK (91 aa)) lie on the Cytoplasmic side of the membrane. The chain crosses the membrane as a helical span at residues 639–659 (TIVNINAILLLAVAVFVHGYF).

This sequence belongs to the sodium:solute symporter (SSF) (TC 2.A.21) family. As to expression, kidney, intestine, liver, skeletal muscle and spleen.

The protein resides in the cell membrane. The enzyme catalyses D-glucose(out) + 2 Na(+)(out) = D-glucose(in) + 2 Na(+)(in). Inhibited by phlorizin. Functionally, low-affinity sodium/D-glucose symporter with a great selectivity for sugars (D-glucose &gt;&gt; D-galactose). Na(+) and D-glucose transport are tightly coupled at neutral pH, but at acidic pH, ion transport is uncoupled from sugar transport. This is Solute carrier family 5 member 4 from Sus scrofa (Pig).